Reading from the N-terminus, the 122-residue chain is Small ribosomal subunit protein uS12 (122 aa).

The disordered stretch occupies residues 1-45 (MPTTNQLVRKERKRQTKKTATPALQGSPQRRGVCTRVSTTTPKKP). The span at 18-28 (KTATPALQGSP) shows a compositional bias: polar residues. Asp-89 is modified (3-methylthioaspartic acid).

This sequence belongs to the universal ribosomal protein uS12 family. Part of the 30S ribosomal subunit. Contacts proteins S8 and S17. May interact with IF1 in the 30S initiation complex.

Functionally, with S4 and S5 plays an important role in translational accuracy. Its function is as follows. Interacts with and stabilizes bases of the 16S rRNA that are involved in tRNA selection in the A site and with the mRNA backbone. Located at the interface of the 30S and 50S subunits, it traverses the body of the 30S subunit contacting proteins on the other side and probably holding the rRNA structure together. The combined cluster of proteins S8, S12 and S17 appears to hold together the shoulder and platform of the 30S subunit. The sequence is that of Small ribosomal subunit protein uS12 from Rubrobacter xylanophilus (strain DSM 9941 / JCM 11954 / NBRC 16129 / PRD-1).